The sequence spans 333 residues: L-asparagine oxygenase (333 aa).

L-asparagine is bound by residues Glu125 and Asn146. Fe cation-binding residues include His155 and Glu157. 2 residues coordinate L-asparagine: Glu157 and Asn158. His287 is a Fe cation binding site. Arg301 lines the 2-oxoglutarate pocket. Arg305 lines the L-asparagine pocket.

The protein belongs to the clavaminate synthase family. Fe(2+) serves as cofactor.

The enzyme catalyses L-asparagine + 2-oxoglutarate + O2 = (2S,3S)-3-hydroxyasparagine + succinate + CO2. Its pathway is antibiotic biosynthesis; calcium-dependent antibiotic biosynthesis. Catalyzes the 3-hydroxylation of L-asparagine to (2S,3S)-3-hydroxyasparagine. The 3-hydroxylated asparagine produced is incorporated at position 9 during the biosynthesis of the non-ribosomally synthesized calcium-dependent antibiotic (CDA), a 11-residue acidic lipopeptide lactone. Is able to hydroxylate only free L-asparagine, since it hydroxylates neither a CDA analog with unmodified Asn at position 9 nor a peptidyl-carrier-protein (PCP)-bound asparagine. Is not active toward D-asparagine. This is L-asparagine oxygenase (asnO) from Streptomyces coelicolor (strain ATCC BAA-471 / A3(2) / M145).